The chain runs to 519 residues: B3 domain-containing protein Os03g0620400 (519 aa).

A DNA-binding region (TF-B3 1) is located at residues 26–119; it reads MKCFHLQMSA…RFEVLILDSD (94 aa). A disordered region spans residues 138–218; it reads ERNAAPVDIS…DPQMPPGRNY (81 aa). A compositionally biased stretch (acidic residues) spans 189 to 209; the sequence is SGEEGTDSSTSEDESSYELDD. 2 consecutive DNA-binding regions (TF-B3) follow at residues 249–349 and 416–516; these read VAIM…LRET and YVSI…IRRN.

The protein resides in the nucleus. In Oryza sativa subsp. japonica (Rice), this protein is B3 domain-containing protein Os03g0620400.